Reading from the N-terminus, the 224-residue chain is LexA repressor (224 aa).

Positions 29–49 form a DNA-binding region, H-T-H motif; sequence RAEIARALGFRSPNAAEDHLK. Active-site for autocatalytic cleavage activity residues include Ser-142 and Lys-179.

It belongs to the peptidase S24 family. As to quaternary structure, homodimer.

The enzyme catalyses Hydrolysis of Ala-|-Gly bond in repressor LexA.. Functionally, represses a number of genes involved in the response to DNA damage (SOS response), including recA and lexA. In the presence of single-stranded DNA, RecA interacts with LexA causing an autocatalytic cleavage which disrupts the DNA-binding part of LexA, leading to derepression of the SOS regulon and eventually DNA repair. This is LexA repressor from Bordetella petrii (strain ATCC BAA-461 / DSM 12804 / CCUG 43448).